We begin with the raw amino-acid sequence, 378 residues long: Monomethylxanthine methyltransferase 1 (378 aa).

S-adenosyl-L-homocysteine is bound by residues Tyr18, Cys61, Asn66, Asp100, Leu101, Ser139, Phe140, and Cys156. Theobromine is bound by residues Tyr157, His160, and Trp161. Asn178, Asp260, Phe262, and Asn263 together coordinate Mg(2+). Residue Tyr362 participates in theobromine binding.

It belongs to the methyltransferase superfamily. Type-7 methyltransferase family. The cofactor is Mg(2+). Expressed, at low levels, in stems, young leaves, floral buds and immature fruits (grains), but not in roots, old leaves and mature fruits.

Its subcellular location is the cytoplasm. The enzyme catalyses 7-methylxanthine + S-adenosyl-L-methionine = theobromine + S-adenosyl-L-homocysteine + H(+). The protein operates within alkaloid biosynthesis. Its function is as follows. Involved in the biosynthesis of caffeine. Catalyzes the conversion of 7-methylxanthine (7mX) to theobromine and of paraxanthine to caffeine. Has a 5-fold preference for 7mX. The polypeptide is Monomethylxanthine methyltransferase 1 (Coffea arabica (Arabian coffee)).